The sequence spans 309 residues: MGKRPPIPPDIENGPPPPARPHFRPPIPVPWVAWLVPLILAANFVTFATTMYVNDCPARSDECLLFDVLGRLSFQPIKENMLLGPSIPTLRKLGALERRLVEEGERWRLISCIWLHGGFLHLMANMISLMCIGMRLEQEFGFMRIGALYVISGLGGSLVSCLTDSQGERVSVGASGALFGLLGAMLSELITNWTIYENKCTALMTLILIIVLNLSVGFLPRVDNSAHFGGFLAGFFLGFVLLLRPQYGYVNPKYIPPGYDMKHKKSKHKCYQHIFRFTSLAILLAGFIAGYTKLLREHTIQSMPFRDFN.

The next 7 helical transmembrane spans lie at 27–47 (IPVP…FVTF), 113–133 (IWLH…MCIG), 140–160 (FGFM…SLVS), 170–190 (VSVG…SELI), 200–220 (CTAL…GFLP), 222–242 (VDNS…FVLL), and 274–294 (IFRF…YTKL). The active-site Nucleophile is the Ser-175. The active-site Charge relay system is the His-227.

It belongs to the peptidase S54 family.

The protein resides in the membrane. It carries out the reaction Cleaves type-1 transmembrane domains using a catalytic dyad composed of serine and histidine that are contributed by different transmembrane domains.. Its function is as follows. Probable rhomboid-type serine protease that catalyzes intramembrane proteolysis. May function in reproductive organs maturation. The polypeptide is RHOMBOID-like protein 5 (Arabidopsis thaliana (Mouse-ear cress)).